The chain runs to 416 residues: MFSFYFNDNKITKLLMVGYGSTGKSVCDFLANFIDITVDISQNDDEFVNYDLNSYDLITVSPGIPLNKSPYRALTKFKDKIVSDIDIFYQYIKDTKAKTIAVTGSNGKSTVVTMTDFVLKDLGYKSILVGNIGTPALNKIGEKFDYCVVEVSSFQINLFNCVRFDLGCIINVSPDHLDRYQNFEQYKQSKLNLAKFSNDFFVYDVHNGIKYAGEYQIIRGAIYRNSTKLLDIVETKLFGEHNLENIIVVLNILDRLGLDINQAIDSIKKFKGLEHRCKIVKKVNGTTYINDSKGTNVGATIAALNSITNSKNIILLLGGVAKGGDFSLMIKSLDKYVKYVYIYGADKEYIESYIKGYCKYQLCNNMKQAFELASQKANSNEIVLLSPACASFDEFSGYAQRGEVFQNLVAQLEQKS.

104 to 110 is an ATP binding site; that stretch reads GSNGKST.

The protein belongs to the MurCDEF family.

Its subcellular location is the cytoplasm. The enzyme catalyses UDP-N-acetyl-alpha-D-muramoyl-L-alanine + D-glutamate + ATP = UDP-N-acetyl-alpha-D-muramoyl-L-alanyl-D-glutamate + ADP + phosphate + H(+). It functions in the pathway cell wall biogenesis; peptidoglycan biosynthesis. In terms of biological role, cell wall formation. Catalyzes the addition of glutamate to the nucleotide precursor UDP-N-acetylmuramoyl-L-alanine (UMA). This is UDP-N-acetylmuramoylalanine--D-glutamate ligase from Francisella tularensis subsp. holarctica (strain FTNF002-00 / FTA).